The primary structure comprises 288 residues: Transmembrane and coiled-coil domain-containing protein 5A (288 aa).

A coiled-coil region spans residues 10 to 192 (KRNIISLNMD…ALFLEREVSK (183 aa)). The chain crosses the membrane as a helical span at residues 224 to 244 (IFCCLFFITLFFIRLLSYMFF).

The protein belongs to the TMCO5 family.

It localises to the endoplasmic reticulum membrane. The protein localises to the nucleus membrane. This chain is Transmembrane and coiled-coil domain-containing protein 5A (TMCO5A), found in Homo sapiens (Human).